The primary structure comprises 352 residues: Maleylacetate reductase (352 aa).

This sequence belongs to the iron-containing alcohol dehydrogenase family.

It carries out the reaction 3-oxoadipate + NAD(+) = maleylacetate + NADH + H(+). The enzyme catalyses 3-oxoadipate + NADP(+) = maleylacetate + NADPH + H(+). It participates in aromatic compound metabolism; 3-chlorocatechol degradation. The chain is Maleylacetate reductase (clcE) from Pseudomonas aeruginosa.